Reading from the N-terminus, the 434-residue chain is Meiosis-specific kinetochore protein (434 aa).

2 disordered regions span residues 1 to 102 (MDKI…PCET) and 249 to 289 (VFAE…PDNK). Residues 46-62 (KGKEQGLRKITEKKELS) show a composition bias toward basic and acidic residues. Residues 64–76 (LTGSSSQRPSLLS) are compositionally biased toward polar residues. The POLO box domain (PBD)-binding signature appears at 334–336 (STP). The segment at 391-394 (EICC) is required for localization to kinetochores. Residues 404–424 (QMRRKDPAVKNRCSPPKDVPL) are disordered.

Interacts with CENPC. Interacts with PLK1; required for recruitment of PLK1 at kinetochores. In terms of tissue distribution, germ cell-specific. Expressed in both testis and ovary. Not expressed in other tissues.

It localises to the chromosome. The protein resides in the centromere. Its subcellular location is the kinetochore. Functionally, key regulator of kinetochore function during meiosis I: required both for mono-orientation of kinetochores on sister chromosomes and protection of centromeric cohesin from separase-mediated cleavage. Acts by facilitating kinetochore mono-orientation during meiosis I, when kinetochores on sister chromosomes face the same direction and are thus captured and pulled by spindle fibers from the same pole. Also required to prevent cleavage of cohesin at centromeres during meiosis I, possibly by acting as a regulator of the shugoshin-dependent protection pathway. Acts in collaboration with PLK1: required for PLK1 enrichment to kinetochores. Not required during meiosis II or mitosis. The polypeptide is Meiosis-specific kinetochore protein (Mus musculus (Mouse)).